Reading from the N-terminus, the 788-residue chain is E3 ubiquitin-protein ligase SspH2 (788 aa).

Residues 1–481 (MPFHIGSGCL…PGYSGPIIRF (481 aa)) are interaction with host membrane and with target proteins. 12 LRR repeats span residues 223-242 (HITTLVIPDNNLTSLPALPP), 243-264 (ELRTLEVSGNQLTSLPVLPPGL), 265-282 (LELSIFSNPLTHLPALPS), 283-302 (GLCKLWIFGNQLTSLPVLPP), 303-324 (GLQELSVSDNQLASLPALPSEL), 325-342 (CKLWAYNNQLTSLPMLPS), 343-364 (GLQELSVSDNQLASLPTLPSEL), 365-382 (YKLWAYNNRLTSLPALPS), 383-404 (GLKELIVSGNRLTSLPVLPSEL), 405-422 (KELMVSGNRLTSLPMLPS), 423-445 (GLLSLSVYRNQLTRLPESLIHLS), and 446-466 (SETTVNLEGNPLSERTLQALR). The interval 482 to 491 (DMAGASAPRE) is linker. Residues 492–788 (TRALHLAAAD…SYLNVQWRRN (297 aa)) form an E3 ubiquitin-protein ligase catalytic domain region. The region spanning 494 to 788 (ALHLAAADWL…SYLNVQWRRN (295 aa)) is the NEL domain. Residue Cys580 is the Glycyl thioester intermediate of the active site.

Belongs to the LRR-containing bacterial E3 ligase family. Ubiquitinated in the presence of host E1 ubiquitin-activating enzyme UBA1, E2 ubiquitin-conjugating enzyme UBE2D2 and ubiquitin.

The protein localises to the secreted. It is found in the host cytoplasm. Its subcellular location is the host apical cell membrane. It catalyses the reaction S-ubiquitinyl-[E2 ubiquitin-conjugating enzyme]-L-cysteine + [acceptor protein]-L-lysine = [E2 ubiquitin-conjugating enzyme]-L-cysteine + N(6)-ubiquitinyl-[acceptor protein]-L-lysine.. Exists in an autoinhibited state in the absence of substrate protein, due to interactions of the leucine-rich repeat domain with the catalytic domain. Is activated upon binding to a substrate protein. Effector proteins function to alter host cell physiology and promote bacterial survival in host tissues. This protein is an E3 ubiquitin ligase that interferes with host's ubiquitination pathway. The polypeptide is E3 ubiquitin-protein ligase SspH2 (sspH2) (Salmonella typhimurium (strain LT2 / SGSC1412 / ATCC 700720)).